A 196-amino-acid polypeptide reads, in one-letter code: Putative NADH dehydrogenase/NAD(P)H nitroreductase PST_3601 (196 aa).

This sequence belongs to the nitroreductase family. HadB/RutE subfamily. The cofactor is FMN.

The sequence is that of Putative NADH dehydrogenase/NAD(P)H nitroreductase PST_3601 from Stutzerimonas stutzeri (strain A1501) (Pseudomonas stutzeri).